The primary structure comprises 95 residues: Large ribosomal subunit protein uL23 (95 aa).

It belongs to the universal ribosomal protein uL23 family. In terms of assembly, part of the 50S ribosomal subunit. Contacts protein L29, and trigger factor when it is bound to the ribosome.

Functionally, one of the early assembly proteins it binds 23S rRNA. One of the proteins that surrounds the polypeptide exit tunnel on the outside of the ribosome. Forms the main docking site for trigger factor binding to the ribosome. This Coxiella burnetii (strain CbuK_Q154) (Coxiella burnetii (strain Q154)) protein is Large ribosomal subunit protein uL23.